We begin with the raw amino-acid sequence, 157 residues long: UPF0756 membrane protein ABC2716 (157 aa).

The next 4 membrane-spanning stretches (helical) occupy residues 8–28 (FLLLLMAIALIAKNQSLIIAI), 54–74 (LGVTIITIAVLVPIATGDIGF), 84–104 (LYAWVALGSGIAVALVAASGI), and 117–137 (LVLGTIVAVSFLNGVAVGPLI).

Belongs to the UPF0756 family.

It localises to the cell membrane. In Shouchella clausii (strain KSM-K16) (Alkalihalobacillus clausii), this protein is UPF0756 membrane protein ABC2716.